The following is a 233-amino-acid chain: SELSFNYPNFQSVEDITFQGGASPRNETLQLTPTDSNGIPIRQRAGHAVYSQPFQLRDTSFYTTFTFVIRTTSNSPADGFAIFIAPPDFPVKRYGGYLGLFEPNTATNTSANKVVAVEFDTWVNTEWKEPRYRHIGIDVNSIVSVRVTRWQDKDVFSRSIATAHVGYDGISKILTAFVTYPDGGNYVLSHVVDLAEIFPGDVRIGFSGATGQYETQYIHSWSFSSTSTNLLRD.

Residues asparagine 26 and asparagine 108 are each glycosylated (N-linked (GlcNAc...) asparagine). Residues glutamate 118 and aspartate 120 each coordinate Mn(2+). Ca(2+) is bound by residues aspartate 120, tryptophan 122, asparagine 124, and glutamate 129. The Mn(2+) site is built by glutamate 129 and histidine 134.

It belongs to the leguminous lectin family. In terms of assembly, monomer.

It is found in the secreted. Functionally, has metal-independent hemagglutinating activity towards erythrocytes from rabbit and human. Hemagglutinating activity is inhibited by glycoproteins fetuin, asialo-fetuin, thyroglobulin and azocasein but not by free carbohydrates. Inhibits ADP- and epinephrin-induced but not collagen-, fibrinogen, thrombin- or arachidonic acid-induced platelet aggregation in vitro. Has anticoagulant activity in vitro. The protein is Lectin of Bauhinia forficata (Brazilian orchid-tree).